The sequence spans 359 residues: Cytokine receptor-like factor 2 (359 aa).

The signal sequence occupies residues 1–19; that stretch reads MAWALAVILLPRLLAAAAA. Residues 20–232 are Extracellular-facing; sequence AAAVTSRGDV…PAPSPALAPP (213 aa). A glycan (N-linked (GlcNAc...) asparagine) is linked at N53. A disulfide bridge connects residues C68 and C82. Positions 119–213 constitute a Fibronectin type-III domain; the sequence is PPWNVTLLWT…WTAVTRLSGA (95 aa). N122 carries an N-linked (GlcNAc...) asparagine glycan. 2 cysteine pairs are disulfide-bonded: C168-C169 and C181-C219. Positions 201–205 match the WSXWS motif motif; that stretch reads PSEWT. A helical transmembrane segment spans residues 233 to 253; that stretch reads LLPLGCGLAALLTLSLLLAAL. At 254-359 the chain is on the cytoplasmic side; that stretch reads RLRRVKDALL…MVGDSGYMTL (106 aa). The Box 1 motif signature appears at 262–270; that stretch reads LLPCVPDPS. Positions 312-336 are disordered; it reads KRVEPEDGTSLCTVPRPPSFEPRGP.

It belongs to the type I cytokine receptor family. Type 5 subfamily. As to quaternary structure, the TSLP receptor is a heterodimer of CRLF2 and IL7R. Binding of TSLP to CRLF2/TSLPR is a mechanistic prerequisite for recruitment of IL7R to the high-affinity ternary complex. In terms of tissue distribution, high level of expression in liver, lung and testis. Also expressed in heart, brain, spleen, thymus and bone marrow. Highly expressed in progenitors and myeloid cells. Isoform 2 is expressed in primary hemotopoietic cells.

It is found in the cell membrane. The protein localises to the secreted. Functionally, receptor for thymic stromal lymphopoietin (TSLP). Forms a functional complex with TSLP and IL7R which is capable of stimulating cell proliferation through activation of STAT3 and STAT5. Also activates JAK2. Implicated in the development of the hematopoietic system. The chain is Cytokine receptor-like factor 2 (Crlf2) from Mus musculus (Mouse).